Here is a 161-residue protein sequence, read N- to C-terminus: Beta-lactoglobulin-1 (161 aa).

Intrachain disulfides connect Cys-66–Cys-159 and Cys-106–Cys-119.

The protein belongs to the calycin superfamily. Lipocalin family. Monomer. As to expression, synthesized in mammary gland and secreted in milk.

Its subcellular location is the secreted. Primary component of whey, it binds retinol and is probably involved in the transport of that molecule. The chain is Beta-lactoglobulin-1 (LGB1) from Canis lupus familiaris (Dog).